The chain runs to 274 residues: Large ribosomal subunit protein uL2 (274 aa).

2 disordered regions span residues 28–53 (APYA…TVRH) and 223–274 (VAMN…RRNK). A compositionally biased stretch (low complexity) spans 39–48 (KSGGRNNNGR).

It belongs to the universal ribosomal protein uL2 family. In terms of assembly, part of the 50S ribosomal subunit. Forms a bridge to the 30S subunit in the 70S ribosome.

In terms of biological role, one of the primary rRNA binding proteins. Required for association of the 30S and 50S subunits to form the 70S ribosome, for tRNA binding and peptide bond formation. It has been suggested to have peptidyltransferase activity; this is somewhat controversial. Makes several contacts with the 16S rRNA in the 70S ribosome. The chain is Large ribosomal subunit protein uL2 from Pseudoalteromonas atlantica (strain T6c / ATCC BAA-1087).